We begin with the raw amino-acid sequence, 347 residues long: uncharacterized protein (347 aa).

This is an uncharacterized protein from Mycoplasma genitalium (strain ATCC 33530 / DSM 19775 / NCTC 10195 / G37) (Mycoplasmoides genitalium).